Here is a 148-residue protein sequence, read N- to C-terminus: WAP four-disulfide core domain protein 6B (148 aa).

The N-terminal stretch at 1–35 (MPPNRLLLPKMRLWGLLPFLVPFILLWSIQEPALA) is a signal peptide. The WAP domain maps to 37–84 (GVFIRTCPKYNKIKCDFEERNQCLRHRECPGEERCCLFACGRKCLDLS). Intrachain disulfides connect Cys-43–Cys-72, Cys-51–Cys-76, Cys-59–Cys-71, Cys-65–Cys-80, Cys-88–Cys-138, Cys-97–Cys-121, and Cys-113–Cys-134. The 51-residue stretch at 88-138 (CSLPQDAGPCLAYLPRWWYNQDTKLCIEFIYGGCQGNPNNFESKAVCTSIC) folds into the BPTI/Kunitz inhibitor domain.

It localises to the secreted. This Mus musculus (Mouse) protein is WAP four-disulfide core domain protein 6B (Wfdc6b).